Reading from the N-terminus, the 99-residue chain is Protein NCBP2AS2 (99 aa).

The segment at 76 to 99 (ELRRGLRGRSGPPPGSQRGPGANI) is disordered.

This Homo sapiens (Human) protein is Protein NCBP2AS2.